Here is a 127-residue protein sequence, read N- to C-terminus: Snaclec CHH-B subunit alpha (127 aa).

Disulfide bonds link cysteine 4–cysteine 15, cysteine 32–cysteine 120, and cysteine 95–cysteine 112. The region spanning 11–121 is the C-type lectin domain; the sequence is YDRYCYKPFK…CEQQHSFICK (111 aa).

This sequence belongs to the snaclec family. Heterodimer of subunits alpha and beta; disulfide-linked. As to expression, expressed by the venom gland.

It localises to the secreted. Its function is as follows. Binds to the subunit GPIbalpha (GP1BA) of the platelet GPIb/V/IX receptor system. It inhibits ristocetin- and vWF-induced platelet aggregation in platelet-rich plasma by inhibiting the binding of vWF to GPIbalpha. This is Snaclec CHH-B subunit alpha from Crotalus horridus (Timber rattlesnake).